The following is a 220-amino-acid chain: UPF0758 protein ASA_4229 (220 aa).

The MPN domain occupies 95–220 (EQLQRGDALT…TVSFAERGWL (126 aa)). The Zn(2+) site is built by H169, H171, and D182. The JAMM motif signature appears at 169 to 182 (HNHPSGVAEPSRAD).

This sequence belongs to the UPF0758 family.

This Aeromonas salmonicida (strain A449) protein is UPF0758 protein ASA_4229.